We begin with the raw amino-acid sequence, 352 residues long: MAIDENKQKALAAALGQIEKQFGKGSIMRLGEDRSMDVETISTGSLSLDIALGAGGLPMGRIVEIYGPESSGKTTLTLQVIAAAQREGKTCAFIDAEHALDPVYARKLGVDIDNLLCSQPDTGEQALEICDALARSGAVDVIVVDSVAALTPKAEIEGEIGDSHMGLAARMMSQAMRKLAGNLKQSNTLLIFINQIRMKIGVMFGNPETTTGGNALKFYASVRLDIRRIGAVKEGDNVVGSETRVKVVKNKIAAPFKQAEFQILYGEGINFFGELVDLGVKEKLIEKAGAWYSYNGDKIGQGKANAITWLKENPAAAKEIEKKVRELLLNNQDSTPDFAVDGNDAEETEQDF.

An ATP-binding site is contributed by 67-74; that stretch reads GPESSGKT. The interval 333-352 is disordered; that stretch reads DSTPDFAVDGNDAEETEQDF. Positions 343–352 are enriched in acidic residues; sequence NDAEETEQDF.

It belongs to the RecA family.

The protein resides in the cytoplasm. In terms of biological role, can catalyze the hydrolysis of ATP in the presence of single-stranded DNA, the ATP-dependent uptake of single-stranded DNA by duplex DNA, and the ATP-dependent hybridization of homologous single-stranded DNAs. It interacts with LexA causing its activation and leading to its autocatalytic cleavage. The protein is Protein RecA of Klebsiella pneumoniae (strain 342).